The following is a 134-amino-acid chain: 16 kDa beta-galactoside-binding lectin (134 aa).

At methionine 1 the chain carries N-acetylmethionine. One can recognise a Galectin domain in the interval glycine 4–serine 134. Tryptophan 69–lysine 75 is an a beta-D-galactoside binding site.

Homodimer. In terms of tissue distribution, mainly in the liver (adult), mainly in the muscle (embryo).

Its function is as follows. This protein binds beta-galactoside. Its physiological function is not yet known. It may be involved in the regulation of differentiation. This chain is 16 kDa beta-galactoside-binding lectin, found in Gallus gallus (Chicken).